Here is a 284-residue protein sequence, read N- to C-terminus: MQNQKTVKIGNIDVANDKPFTLFAGMNVLESRDLAMRMCETYVEITDRLGIPYVFKASFDKANRSSVHSYRGPGMEEGLKIFQELKDTFGVKIITDIHTEAQAQPVADVVDVIQLPAFLARQTDLVETMARTGAVINVKKPQFMSPDQVGNIVDKFAECGNENIILCERGSCMGYDNLVVDMLGFGVMKKVSNGSPIIFDVTHSLQNRDPSGKASGGRRSQTVELAKAGLATGIAGLFIEAHPTPDKALCDGPSALPLDQLEPFLKQMKALDDLIKGFEHIDIK.

Belongs to the KdsA family.

It is found in the cytoplasm. It catalyses the reaction D-arabinose 5-phosphate + phosphoenolpyruvate + H2O = 3-deoxy-alpha-D-manno-2-octulosonate-8-phosphate + phosphate. The protein operates within carbohydrate biosynthesis; 3-deoxy-D-manno-octulosonate biosynthesis; 3-deoxy-D-manno-octulosonate from D-ribulose 5-phosphate: step 2/3. Its pathway is bacterial outer membrane biogenesis; lipopolysaccharide biosynthesis. This Aliivibrio salmonicida (strain LFI1238) (Vibrio salmonicida (strain LFI1238)) protein is 2-dehydro-3-deoxyphosphooctonate aldolase.